Here is a 940-residue protein sequence, read N- to C-terminus: Pentatricopeptide repeat-containing protein At5g14770, mitochondrial (940 aa).

The transit peptide at 1–24 (MIMIRIWNNYKGKYRFFLSNCRSF) directs the protein to the mitochondrion. 24 PPR repeats span residues 59 to 93 (YVSL…GVVP), 94 to 129 (DSRL…GVSP), 130 to 161 (DVFA…VISI), 162 to 196 (DTVT…GILP), 197 to 231 (DTVS…NLIT), 241 to 259 (NLHA…GFDP), 260 to 294 (DVVT…SVYP), 295 to 329 (NHVT…GIPV), 330 to 364 (DLVV…NQVP), 365 to 399 (NVVT…SVIP), 400 to 434 (NVVT…NVVP), 435 to 469 (NGFT…GVEE), 470 to 504 (NNYI…GVTL), 505 to 539 (DQIN…GMPW), 540 to 573 (DVVS…GIEP), 574 to 608 (DIAT…GIKP), 609 to 643 (SLMS…EIHP), 644 to 678 (NLTT…GIKL), 679 to 713 (SRQV…GFIP), 714 to 748 (DTVT…GISP), 749 to 783 (NVAT…GMRP), 784 to 818 (DDFT…GLVP), 819 to 853 (KTST…GVSP), and 854 to 891 (NTST…GLLK).

It belongs to the PPR family. P subfamily.

It is found in the mitochondrion. This chain is Pentatricopeptide repeat-containing protein At5g14770, mitochondrial, found in Arabidopsis thaliana (Mouse-ear cress).